Consider the following 389-residue polypeptide: Succinate--CoA ligase [ADP-forming] subunit beta (389 aa).

One can recognise an ATP-grasp domain in the interval 9–244 (KQLFADYGLP…ETQEDPREVE (236 aa)). Residues Lys46, 53–55 (GRG), Glu99, Gly102, and Glu107 each bind ATP. Positions 199 and 213 each coordinate Mg(2+). Substrate-binding positions include Asn264 and 321–323 (GIV).

Belongs to the succinate/malate CoA ligase beta subunit family. Heterotetramer of two alpha and two beta subunits. Requires Mg(2+) as cofactor.

The catalysed reaction is succinate + ATP + CoA = succinyl-CoA + ADP + phosphate. It catalyses the reaction GTP + succinate + CoA = succinyl-CoA + GDP + phosphate. It participates in carbohydrate metabolism; tricarboxylic acid cycle; succinate from succinyl-CoA (ligase route): step 1/1. Its function is as follows. Succinyl-CoA synthetase functions in the citric acid cycle (TCA), coupling the hydrolysis of succinyl-CoA to the synthesis of either ATP or GTP and thus represents the only step of substrate-level phosphorylation in the TCA. The beta subunit provides nucleotide specificity of the enzyme and binds the substrate succinate, while the binding sites for coenzyme A and phosphate are found in the alpha subunit. This is Succinate--CoA ligase [ADP-forming] subunit beta from Tolumonas auensis (strain DSM 9187 / NBRC 110442 / TA 4).